We begin with the raw amino-acid sequence, 443 residues long: Tryptophan synthase beta chain 2, chloroplastic (443 aa).

The interval 1–32 (PGPPPPAPEGRRRRGRGRNAAGQAVAAEASPA) is disordered. The N-terminal 45 residues, 1–45 (PGPPPPAPEGRRRRGRGRNAAGQAVAAEASPAAVEMGNGAAAPGL), are a transit peptide targeting the chloroplast. A compositionally biased stretch (low complexity) spans 18-32 (RNAAGQAVAAEASPA). At K138 the chain carries N6-(pyridoxal phosphate)lysine.

It belongs to the TrpB family. Tetramer of two alpha and two beta chains. Pyridoxal 5'-phosphate serves as cofactor.

It is found in the plastid. It localises to the chloroplast. The catalysed reaction is (1S,2R)-1-C-(indol-3-yl)glycerol 3-phosphate + L-serine = D-glyceraldehyde 3-phosphate + L-tryptophan + H2O. It functions in the pathway amino-acid biosynthesis; L-tryptophan biosynthesis; L-tryptophan from chorismate: step 5/5. Its function is as follows. The beta subunit is responsible for the synthesis of L-tryptophan from indole and L-serine. In Zea mays (Maize), this protein is Tryptophan synthase beta chain 2, chloroplastic (TSB2).